Consider the following 324-residue polypeptide: Putative glycosyltransferase R655 (324 aa).

The protein belongs to the glycosyltransferase 25 family.

This is Putative glycosyltransferase R655 from Acanthamoeba polyphaga (Amoeba).